A 74-amino-acid chain; its full sequence is MIGQKAWVNIGKTEFILLLVVGILTIINVLTADGEKRTFHSPKKKNINHLTLYDCVSPEVQNSINETGRVTNFF.

The protein is Putative ribosome-binding protein YbzG (ybzG) of Bacillus subtilis (strain 168).